The primary structure comprises 308 residues: Ribosomal RNA small subunit methyltransferase H (308 aa).

Residues 35–37 (GGH), Asp55, Phe79, Asp100, and Gln107 each bind S-adenosyl-L-methionine.

The protein belongs to the methyltransferase superfamily. RsmH family.

It is found in the cytoplasm. It carries out the reaction cytidine(1402) in 16S rRNA + S-adenosyl-L-methionine = N(4)-methylcytidine(1402) in 16S rRNA + S-adenosyl-L-homocysteine + H(+). Specifically methylates the N4 position of cytidine in position 1402 (C1402) of 16S rRNA. The sequence is that of Ribosomal RNA small subunit methyltransferase H from Dechloromonas aromatica (strain RCB).